Reading from the N-terminus, the 1390-residue chain is DNA-directed RNA polymerase subunit beta'' (1390 aa).

Zn(2+) is bound by residues cysteine 224, cysteine 294, cysteine 301, and cysteine 304.

This sequence belongs to the RNA polymerase beta' chain family. RpoC2 subfamily. In terms of assembly, in plastids the minimal PEP RNA polymerase catalytic core is composed of four subunits: alpha, beta, beta', and beta''. When a (nuclear-encoded) sigma factor is associated with the core the holoenzyme is formed, which can initiate transcription. Zn(2+) serves as cofactor.

It localises to the plastid. Its subcellular location is the chloroplast. The catalysed reaction is RNA(n) + a ribonucleoside 5'-triphosphate = RNA(n+1) + diphosphate. In terms of biological role, DNA-dependent RNA polymerase catalyzes the transcription of DNA into RNA using the four ribonucleoside triphosphates as substrates. The protein is DNA-directed RNA polymerase subunit beta'' of Ceratophyllum demersum (Rigid hornwort).